The following is a 200-amino-acid chain: MQKFIIHKGIACPLEYANIDTDQIIPKQFLLAVSKQGFGKHLFHDLRYLDDKESVLNMDFNLNKKEYQNSSILVSFENFGSGSSREHAPWALVDYGIRAIIAPSFADIFKNNALGNGLLTIELAKDEVLEIVDELKKSQDKNIEISLLEKRVFFKDKIFSFDLDDFHRICLLEGLDNIALTLKHEAQIKAYEKNSKSFLV.

Belongs to the LeuD family. LeuD type 1 subfamily. As to quaternary structure, heterodimer of LeuC and LeuD.

The catalysed reaction is (2R,3S)-3-isopropylmalate = (2S)-2-isopropylmalate. It functions in the pathway amino-acid biosynthesis; L-leucine biosynthesis; L-leucine from 3-methyl-2-oxobutanoate: step 2/4. In terms of biological role, catalyzes the isomerization between 2-isopropylmalate and 3-isopropylmalate, via the formation of 2-isopropylmaleate. This Campylobacter jejuni subsp. jejuni serotype O:6 (strain 81116 / NCTC 11828) protein is 3-isopropylmalate dehydratase small subunit.